A 209-amino-acid polypeptide reads, in one-letter code: Large ribosomal subunit protein uL3 (209 aa).

It belongs to the universal ribosomal protein uL3 family. Part of the 50S ribosomal subunit. Forms a cluster with proteins L14 and L19.

Functionally, one of the primary rRNA binding proteins, it binds directly near the 3'-end of the 23S rRNA, where it nucleates assembly of the 50S subunit. The chain is Large ribosomal subunit protein uL3 from Clostridium tetani (strain Massachusetts / E88).